Reading from the N-terminus, the 168-residue chain is Endoribonuclease YbeY (168 aa).

Residues H132, H136, and H142 each contribute to the Zn(2+) site.

The protein belongs to the endoribonuclease YbeY family. Zn(2+) serves as cofactor.

The protein resides in the cytoplasm. Functionally, single strand-specific metallo-endoribonuclease involved in late-stage 70S ribosome quality control and in maturation of the 3' terminus of the 16S rRNA. This is Endoribonuclease YbeY from Clostridium perfringens (strain ATCC 13124 / DSM 756 / JCM 1290 / NCIMB 6125 / NCTC 8237 / Type A).